Reading from the N-terminus, the 294-residue chain is Potassium-transporting ATPase subunit beta (294 aa).

Topologically, residues 1 to 36 (MAALQEKKSCSQRMAEFRHYCWNPDTGQMLGRTPAR) are cytoplasmic. The helical; Signal-anchor for type II membrane protein transmembrane segment at 37 to 57 (WVWISLYYAGFYVVMTGLFAL) threads the bilayer. Residues 58–294 (CIYVLMQTID…KVEFKLTIQK (237 aa)) are Extracellular-facing. N-linked (GlcNAc...) asparagine glycosylation is found at Asn-99, Asn-103, Asn-130, Asn-146, and Asn-161. A disulfide bond links Cys-131 and Cys-152. Cysteines 162 and 178 form a disulfide. N-linked (GlcNAc...) asparagine glycans are attached at residues Asn-193 and Asn-225. The immunoglobulin-like stretch occupies residues 194 to 294 (NTAPRVDCTF…KVEFKLTIQK (101 aa)). The cysteines at positions 201 and 266 are disulfide-linked.

The protein belongs to the X(+)/potassium ATPases subunit beta family. The ATPase pump is composed of two subunits: alpha (catalytic) and beta (regulatory). Interacts with alpha subunit ATP12A; this interaction is required for the formation of a functionally active pump and targeting at the plasma membrane. Interacts (via N-terminus) with alpha subunit ATP4A (via the P-domain). In terms of processing, N-glycosylation is necessary for assembly and functional expression of the pump at the plasma membrane. As to expression, expressed in parietal cells (at protein level).

The protein localises to the apical cell membrane. The protein resides in the cell membrane. In terms of biological role, the beta subunit of the gastric H(+)/K(+) ATPase pump which transports H(+) ions in exchange for K(+) ions across the apical membrane of parietal cells. Plays a structural and regulatory role in the assembly and membrane targeting of a functionally active pump. Within a transport cycle, the transfer of a H(+) ion across the membrane is coupled to ATP hydrolysis and is associated with a transient phosphorylation of the alpha subunit that shifts the pump conformation from inward-facing (E1) to outward-facing state (E2). Interacts with the phosphorylation domain of the alpha subunit and functions as a ratchet, stabilizing the lumenal-open E2 conformation and preventing the reverse reaction of the transport cycle. This chain is Potassium-transporting ATPase subunit beta (Atp4b), found in Mus musculus (Mouse).